The primary structure comprises 321 residues: MKKNFYTISKTMSRSLKLILFSVFIGFSIFLIPQPTWAYPFWAQQKFENPREATGKIVCANCHVASMPTRAEVPQAVAADSVFKTVVEIPYKKDLQEIGADGSKVPLQVGAVVMLPDGFKLAPQERWTDEIKEETQGVYFTQYSEEQENIILVGPLPGDQNREIVFPVLSPDPRKDSNYNFGKYSIHVGGNRGRGQVYPTGEKSNNNLFTATNSGTITSIETNEDGSQIINLNNEEGESFTENLPAGTSLLIKEGDTIEKGAKLTEDPNVGGFGQLDKEIVLQSKARVIGMIIFFIGVGLSQIMLVLKKKQVEKVQAAEGI.

The first 38 residues, 1 to 38 (MKKNFYTISKTMSRSLKLILFSVFIGFSIFLIPQPTWA), serve as a signal peptide directing secretion. Heme contacts are provided by Tyr39, Cys59, Cys62, and His63. A helical membrane pass occupies residues 288–308 (VIGMIIFFIGVGLSQIMLVLK).

Belongs to the cytochrome f family. The 4 large subunits of the cytochrome b6-f complex are cytochrome b6, subunit IV (17 kDa polypeptide, PetD), cytochrome f and the Rieske protein, while the 4 small subunits are PetG, PetL, PetM and PetN. The complex functions as a dimer. It depends on heme as a cofactor.

Its subcellular location is the cellular thylakoid membrane. In terms of biological role, component of the cytochrome b6-f complex, which mediates electron transfer between photosystem II (PSII) and photosystem I (PSI), cyclic electron flow around PSI, and state transitions. In Prochlorococcus marinus (strain NATL2A), this protein is Cytochrome f.